Reading from the N-terminus, the 102-residue chain is Large ribosomal subunit protein uL24 (102 aa).

It belongs to the universal ribosomal protein uL24 family. In terms of assembly, part of the 50S ribosomal subunit.

One of two assembly initiator proteins, it binds directly to the 5'-end of the 23S rRNA, where it nucleates assembly of the 50S subunit. Its function is as follows. One of the proteins that surrounds the polypeptide exit tunnel on the outside of the subunit. The polypeptide is Large ribosomal subunit protein uL24 (Cupriavidus metallidurans (strain ATCC 43123 / DSM 2839 / NBRC 102507 / CH34) (Ralstonia metallidurans)).